A 254-amino-acid polypeptide reads, in one-letter code: Thiazole synthase (254 aa).

The active-site Schiff-base intermediate with DXP is the lysine 95. Residues glycine 156, 182 to 183 (AG), and 204 to 205 (NT) each bind 1-deoxy-D-xylulose 5-phosphate.

The protein belongs to the ThiG family. Homotetramer. Forms heterodimers with either ThiH or ThiS.

Its subcellular location is the cytoplasm. The enzyme catalyses [ThiS sulfur-carrier protein]-C-terminal-Gly-aminoethanethioate + 2-iminoacetate + 1-deoxy-D-xylulose 5-phosphate = [ThiS sulfur-carrier protein]-C-terminal Gly-Gly + 2-[(2R,5Z)-2-carboxy-4-methylthiazol-5(2H)-ylidene]ethyl phosphate + 2 H2O + H(+). It functions in the pathway cofactor biosynthesis; thiamine diphosphate biosynthesis. Functionally, catalyzes the rearrangement of 1-deoxy-D-xylulose 5-phosphate (DXP) to produce the thiazole phosphate moiety of thiamine. Sulfur is provided by the thiocarboxylate moiety of the carrier protein ThiS. In vitro, sulfur can be provided by H(2)S. This Shewanella sp. (strain MR-7) protein is Thiazole synthase.